Consider the following 212-residue polypeptide: MACRSWVLGILLVLVGCAGPEVHQGEVTTVVIQPVQEQADIANEPFVLTGRLAVNARQHRFSGGIRWQHTGQSDEIYLFSPLGQIVAEIFRDQTGVRLVTSEPAIYRAQNAEYLTSQVLGWELPLAGMRFWVRGTHFPDTVAEKDLDKNRRTVAIRQDGWQVVYQNYYPAQEGMSVLPRLLEFSRPDVKMRLLVDQWQGETKSGDATGRKLP.

The first 16 residues, 1–16 (MACRSWVLGILLVLVG), serve as a signal peptide directing secretion. A lipid anchor (N-palmitoyl cysteine) is attached at Cys-17. Cys-17 is lipidated: S-diacylglycerol cysteine.

It belongs to the LolB family. Monomer.

The protein localises to the cell outer membrane. Plays a critical role in the incorporation of lipoproteins in the outer membrane after they are released by the LolA protein. The sequence is that of Outer-membrane lipoprotein LolB from Nitrosomonas europaea (strain ATCC 19718 / CIP 103999 / KCTC 2705 / NBRC 14298).